The chain runs to 248 residues: PF03932 family protein CutC (248 aa).

Belongs to the CutC family. In terms of assembly, homodimer.

The protein localises to the cytoplasm. In Escherichia coli O45:K1 (strain S88 / ExPEC), this protein is PF03932 family protein CutC.